The sequence spans 568 residues: MIPQQQPSGMPFHRYQPFKPVDLPDRTWPSKTITKAPRWLSTDLRDGNQALIEPMDTERKREIFDLLVRMGYKEIEVGFPAASQTDYDFVRYLIEEDRIPDDVQISVLTQAREELIERTVQSLVGAKRATVHLYNATSPEFRRIVFGVNREECKGIAVEGTRTVLKFAEQYLKDTEYFGYEYSPEIFIDTELEFALEVCEAVMDVYQPGPDREIILNLPATVERATPNVYADQIEWMSRNLSRREYVCLSVHPHNDRGTAVAAAELAVMAGADRVEGCLFGHGERTGNVCLVTLGLNLFSQGIDPMIDFSNIDEIRRTVEHCTQLPVNPRHPYGGDLVYTAFSGSHQDAIKKGFHALEADAAAAGVPVDEYRWNMPYLPIDPKDVGRTYEAVIRVNSQSGKGGVSYVLQRDYSIDLPRRLQIEFSRVVQQFADAEGGEFSGERIWEIFTDTYLSEGVVGVMAYRSETSEDGEYCISADVRLRGEIREITGTGNGPISAFVDALAGVGFKLRVLDYSEHALSEGGDARAAAYVEAEVDGNVLWGVGISSNITTASLKAVCSAVNRAQQS.

The Pyruvate carboxyltransferase domain occupies 37-313 (PRWLSTDLRD…DPMIDFSNID (277 aa)). Mg(2+) is bound by residues Asp-46, His-252, His-254, and Asn-288. Residues 455-568 (EGVVGVMAYR…CSAVNRAQQS (114 aa)) are regulatory domain.

The protein belongs to the alpha-IPM synthase/homocitrate synthase family. LeuA type 2 subfamily. In terms of assembly, homodimer. Mg(2+) serves as cofactor.

Its subcellular location is the cytoplasm. The enzyme catalyses 3-methyl-2-oxobutanoate + acetyl-CoA + H2O = (2S)-2-isopropylmalate + CoA + H(+). It functions in the pathway amino-acid biosynthesis; L-leucine biosynthesis; L-leucine from 3-methyl-2-oxobutanoate: step 1/4. Functionally, catalyzes the condensation of the acetyl group of acetyl-CoA with 3-methyl-2-oxobutanoate (2-ketoisovalerate) to form 3-carboxy-3-hydroxy-4-methylpentanoate (2-isopropylmalate). The sequence is that of 2-isopropylmalate synthase from Thermobifida fusca (strain YX).